The primary structure comprises 206 residues: Large ribosomal subunit protein uL4 (206 aa).

The tract at residues 62–85 (KPWRQKGTGRARQGSTRSPQFRGG) is disordered.

It belongs to the universal ribosomal protein uL4 family. In terms of assembly, part of the 50S ribosomal subunit.

One of the primary rRNA binding proteins, this protein initially binds near the 5'-end of the 23S rRNA. It is important during the early stages of 50S assembly. It makes multiple contacts with different domains of the 23S rRNA in the assembled 50S subunit and ribosome. Functionally, forms part of the polypeptide exit tunnel. The polypeptide is Large ribosomal subunit protein uL4 (Rhodospirillum centenum (strain ATCC 51521 / SW)).